The chain runs to 75 residues: Putative UPF0377 protein YAL067W-A (75 aa).

This sequence belongs to the UPF0377 family.

The polypeptide is Putative UPF0377 protein YAL067W-A (Saccharomyces cerevisiae (strain ATCC 204508 / S288c) (Baker's yeast)).